A 61-amino-acid polypeptide reads, in one-letter code: Small ribosomal subunit protein bS21 (61 aa).

This sequence belongs to the bacterial ribosomal protein bS21 family.

This chain is Small ribosomal subunit protein bS21, found in Methylacidiphilum infernorum (isolate V4) (Methylokorus infernorum (strain V4)).